Consider the following 224-residue polypeptide: Zinc finger C4H2 domain-containing protein (224 aa).

Residues L11–L104 are a coiled coil. A C4H2-type zinc finger spans residues C189 to C206.

As to expression, expressed in fetal tissues, including in brain, intestine, lung, kidney and muscle. Isoform 1 is expressed in numerous fetal brain regions. Isoform 3 is highly expressed in numerous fetal brain regions and spinal cord.

It localises to the cytoplasm. It is found in the nucleus. The protein resides in the postsynaptic cell membrane. Functionally, plays a role in interneurons differentiation. Involved in neuronal development and in neuromuscular junction formation. This is Zinc finger C4H2 domain-containing protein (ZC4H2) from Homo sapiens (Human).